The following is a 172-amino-acid chain: Protein GrpE (172 aa).

A disordered region spans residues 1 to 23 (MNQDHPECDSEELTQNSPETDPL).

Belongs to the GrpE family. In terms of assembly, homodimer.

It localises to the cytoplasm. Its function is as follows. Participates actively in the response to hyperosmotic and heat shock by preventing the aggregation of stress-denatured proteins, in association with DnaK and GrpE. It is the nucleotide exchange factor for DnaK and may function as a thermosensor. Unfolded proteins bind initially to DnaJ; upon interaction with the DnaJ-bound protein, DnaK hydrolyzes its bound ATP, resulting in the formation of a stable complex. GrpE releases ADP from DnaK; ATP binding to DnaK triggers the release of the substrate protein, thus completing the reaction cycle. Several rounds of ATP-dependent interactions between DnaJ, DnaK and GrpE are required for fully efficient folding. This is Protein GrpE from Xylella fastidiosa (strain 9a5c).